The sequence spans 667 residues: Bifunctional polymyxin resistance protein ArnA (667 aa).

Positions 1–304 are formyltransferase ArnAFT; it reads MKAIVFAYHD…EMGIVTDVRL (304 aa). His104 (proton donor; for formyltransferase activity) is an active-site residue. (6R)-10-formyltetrahydrofolate-binding positions include Arg114 and 136–140; that span reads VKKAD. The dehydrogenase ArnADH stretch occupies residues 314–667; it reads RRTRVLILGV…TAAPKDELNA (354 aa). NAD(+)-binding positions include Asp347 and 368–369; that span reads DI. Residues Ala393, Tyr398, and 432–433 contribute to the UDP-alpha-D-glucuronate site; that span reads TS. The Proton acceptor; for decarboxylase activity role is filled by Glu434. Residues Arg460, Asn492, 526 to 535, and Tyr613 each bind UDP-alpha-D-glucuronate; that span reads KLVDGGAQKR. Residue Arg619 is the Proton donor; for decarboxylase activity of the active site.

The protein in the N-terminal section; belongs to the Fmt family. UDP-L-Ara4N formyltransferase subfamily. In the C-terminal section; belongs to the NAD(P)-dependent epimerase/dehydratase family. UDP-glucuronic acid decarboxylase subfamily. Homohexamer, formed by a dimer of trimers.

The catalysed reaction is UDP-alpha-D-glucuronate + NAD(+) = UDP-beta-L-threo-pentopyranos-4-ulose + CO2 + NADH. It carries out the reaction UDP-4-amino-4-deoxy-beta-L-arabinose + (6R)-10-formyltetrahydrofolate = UDP-4-deoxy-4-formamido-beta-L-arabinose + (6S)-5,6,7,8-tetrahydrofolate + H(+). It functions in the pathway nucleotide-sugar biosynthesis; UDP-4-deoxy-4-formamido-beta-L-arabinose biosynthesis; UDP-4-deoxy-4-formamido-beta-L-arabinose from UDP-alpha-D-glucuronate: step 1/3. It participates in nucleotide-sugar biosynthesis; UDP-4-deoxy-4-formamido-beta-L-arabinose biosynthesis; UDP-4-deoxy-4-formamido-beta-L-arabinose from UDP-alpha-D-glucuronate: step 3/3. Its pathway is bacterial outer membrane biogenesis; lipopolysaccharide biosynthesis. Bifunctional enzyme that catalyzes the oxidative decarboxylation of UDP-glucuronic acid (UDP-GlcUA) to UDP-4-keto-arabinose (UDP-Ara4O) and the addition of a formyl group to UDP-4-amino-4-deoxy-L-arabinose (UDP-L-Ara4N) to form UDP-L-4-formamido-arabinose (UDP-L-Ara4FN). The modified arabinose is attached to lipid A and is required for resistance to polymyxin and cationic antimicrobial peptides. The sequence is that of Bifunctional polymyxin resistance protein ArnA from Yersinia pseudotuberculosis serotype IB (strain PB1/+).